A 1413-amino-acid polypeptide reads, in one-letter code: GTPase-activating protein and VPS9 domain-containing protein 1 (1413 aa).

The Ras-GAP domain occupies 147–385; sequence SYLLQVLRYL…AAFLDVVIGG (239 aa). Ser227 is subject to Phosphoserine. Residues Thr390 and Thr458 each carry the phosphothreonine modification. Disordered regions lie at residues 448–474, 540–587, 718–799, and 826–852; these read KPGKSSSLEMTPYSTPQLSPAATPANK, LSDG…GSNG, ESCS…PPSQ, and HYARPSHPPPDPPILEGAVGGNEARLP. Positions 451-467 are enriched in polar residues; it reads KSSSLEMTPYSTPQLSP. Tyr460 is modified (phosphotyrosine). Phosphoserine is present on Ser466. Thr470 carries the phosphothreonine modification. Phosphoserine occurs at positions 721, 725, and 736. Residues 737–756 are compositionally biased toward polar residues; that stretch reads SRPSTPGLSVVSGISATSED. Position 741 is a phosphothreonine (Thr741). Phosphoserine is present on Ser745. Positions 757-768 are enriched in basic and acidic residues; sequence IPNKIEDLRSEC. A phosphoserine mark is found at Ser856, Ser882, Ser883, Ser888, Ser894, Ser946, Ser972, and Ser999. Residues 871 to 882 show a composition bias toward basic and acidic residues; that stretch reads HSYPERLVRSRS. Positions 871 to 957 are disordered; it reads HSYPERLVRS…DEKSDRNRPW (87 aa). The span at 883–897 shows a compositional bias: low complexity; the sequence is SDVVSSVRRPMSDPS. Residues 934 to 955 show a composition bias toward basic and acidic residues; it reads DSSRGETEERKDSDDEKSDRNR. The segment at 1011-1049 is disordered; the sequence is VMGDGESAHDSPRDETLQNISADDLPDSASQAAHPQDSA. The span at 1016 to 1026 shows a compositional bias: basic and acidic residues; the sequence is ESAHDSPRDET. Residues Ser1031 and Ser1038 each carry the phosphoserine modification. A VPS9 domain is found at 1273–1413; sequence ILRDQVLHEH…EFIKTIDDRK (141 aa).

Belongs to the GAPVD1 family. As to quaternary structure, interacts with TRIP10/CIP4. Interacts with RAB5A.

The protein localises to the membrane. It is found in the endosome. In terms of biological role, acts both as a GTPase-activating protein (GAP) and a guanine nucleotide exchange factor (GEF), and participates in various processes such as endocytosis, insulin receptor internalization or LC2A4/GLUT4 trafficking. Acts as a GEF for the Ras-related protein RAB31 by exchanging bound GDP for free GTP, leading to regulate LC2A4/GLUT4 trafficking. In the absence of insulin, it maintains RAB31 in an active state and promotes a futile cycle between LC2A4/GLUT4 storage vesicles and early endosomes, retaining LC2A4/GLUT4 inside the cells. Upon insulin stimulation, it is translocated to the plasma membrane, releasing LC2A4/GLUT4 from intracellular storage vesicles. Also involved in EGFR trafficking and degradation, possibly by promoting EGFR ubiquitination and subsequent degradation by the proteasome. Has GEF activity for Rab5 and GAP activity for Ras. The sequence is that of GTPase-activating protein and VPS9 domain-containing protein 1 (GAPVD1) from Bos taurus (Bovine).